Consider the following 990-residue polypeptide: Protein SUPPRESSOR OF MAX2 1 (990 aa).

The Clp R domain occupies 8-167; sequence IQQTLTPEAA…KATIEQSLNN (160 aa). Repeat stretches follow at residues 12–83 and 96–167; these read LTPE…LERL and ISNA…SLNN. A disordered region spans residues 818–855; it reads PKKEHGSGLSFDLNQAADTDDGSHNTSDLTTDNDQDEQ. The short motif at 828-832 is the EAR element; it reads FDLNQ.

The protein belongs to the ClpA/ClpB family. Interacts probably with TPL/TPR in an EAR-motif dependent manner. Interacts with TPL, TPR1, TPR2 and TPR4. Highly expressed in dry seeds. Expressed in seedlings, rosette leaves and senescing leaves. Detected in roots and axillary shoots. Expressed in the primary rosette buds and expanding leaves of adult rosettes, the vasculature of the hypocotyls, cotyledons, and mature roots, in the midvein and petioles of young leaves, the young leaf periphery, stomata, and the root caps.

Probable component of a transcriptional corepressor complex that acts downstream of MAX2 to negatively regulate karrikins/strigolactone responses. Probable target of MAX2 during germination and seedling photomorphogenesis. Acts probably specifically in the karrikin pathway. The sequence is that of Protein SUPPRESSOR OF MAX2 1 from Arabidopsis thaliana (Mouse-ear cress).